Consider the following 352-residue polypeptide: Mas-related G-protein coupled receptor member X2 (352 aa).

Residues 1-45 (MEERNISGRDLRVDSNITYWGTNITAVNESNHTGMSFCEVVSCTM) are Extracellular-facing. N-linked (GlcNAc...) asparagine glycans are attached at residues asparagine 5, asparagine 16, asparagine 23, asparagine 28, and asparagine 31. A helical transmembrane segment spans residues 46-66 (VFLSLIVALVGLVGNATVLWF). Over 67–75 (LGFQMRRNA) the chain is Cytoplasmic. The chain crosses the membrane as a helical span at residues 76–96 (FSVYILNLAGADFLFICFQIG). Residues 97-107 (YCFHMILDIDS) are Extracellular-facing. Residues 108-128 (IPIEIDLFYLVVLNFPYFCGL) traverse the membrane as a helical segment. Residues 129 to 155 (SILSAISIERCLSVMWPIWYHCQRPRH) are Cytoplasmic-facing. The helical transmembrane segment at 156–176 (TSAVICTLLWVLSLVCSLLEG) threads the bilayer. Over 177–195 (KECGFLYYTSDPGWCKTFD) the chain is Extracellular. Residues 196 to 216 (LITATWLIVLFVALLGSSLAL) traverse the membrane as a helical segment. Over 217–239 (VITIFWGLHKIPVTRLYVAIVFT) the chain is Cytoplasmic. The chain crosses the membrane as a helical span at residues 240 to 260 (VLVFLLFGLPYGIYWFLLVWI). Over 261–275 (EKFYYVLPCSIYPVT) the chain is Extracellular. A helical transmembrane segment spans residues 276–296 (VFLSCVNSSAKPIIYCLVGSI). The Cytoplasmic portion of the chain corresponds to 297–347 (RHHRFQRKTLKLFLQRAMQDTPEEEECGEMGSSGRSREIKTIWKGLRAALI).

Belongs to the G-protein coupled receptor 1 family. Mas subfamily.

Its subcellular location is the cell membrane. Its function is as follows. Orphan receptor. Probably involved in the function of nociceptive neurons. May regulate nociceptor function and/or development, including the sensation or modulation of pain. This Mus musculus (Mouse) protein is Mas-related G-protein coupled receptor member X2 (Mrgprx2).